We begin with the raw amino-acid sequence, 594 residues long: UvrABC system protein C (594 aa).

Residues 17–94 (LEPGCYLMKD…IKQYQPRYNI (78 aa)) form the GIY-YIG domain. The region spanning 199–234 (KTILNHLEERMNKASEQLDFEQAKEYRDMIQHIHNL) is the UVR domain.

This sequence belongs to the UvrC family. As to quaternary structure, interacts with UvrB in an incision complex.

Its subcellular location is the cytoplasm. In terms of biological role, the UvrABC repair system catalyzes the recognition and processing of DNA lesions. UvrC both incises the 5' and 3' sides of the lesion. The N-terminal half is responsible for the 3' incision and the C-terminal half is responsible for the 5' incision. The polypeptide is UvrABC system protein C (Staphylococcus epidermidis (strain ATCC 35984 / DSM 28319 / BCRC 17069 / CCUG 31568 / BM 3577 / RP62A)).